A 531-amino-acid polypeptide reads, in one-letter code: NADH-quinone oxidoreductase subunit N (531 aa).

14 helical membrane-spanning segments follow: residues 8–28 (VEYF…AGVL), 41–61 (AQVT…IVVA), 81–101 (ATLF…VFMA), 146–166 (GATQ…MMVF), 172–192 (LLTM…MCGL), 208–228 (FLLG…LYGA), 250–270 (ALAG…AVPF), 282–302 (PTPI…GALL), 318–338 (PVLW…AVNQ), 350–370 (VAHV…GLSA), 372–392 (LFYL…VGLV), 418–438 (IVGV…LTSG), 453–473 (GAVP…YFYV), and 500–520 (AAIA…QPVL).

It belongs to the complex I subunit 2 family. As to quaternary structure, NDH-1 is composed of 14 different subunits. Subunits NuoA, H, J, K, L, M, N constitute the membrane sector of the complex.

It localises to the cell membrane. It catalyses the reaction a quinone + NADH + 5 H(+)(in) = a quinol + NAD(+) + 4 H(+)(out). NDH-1 shuttles electrons from NADH, via FMN and iron-sulfur (Fe-S) centers, to quinones in the respiratory chain. The immediate electron acceptor for the enzyme in this species is believed to be a menaquinone. Couples the redox reaction to proton translocation (for every two electrons transferred, four hydrogen ions are translocated across the cytoplasmic membrane), and thus conserves the redox energy in a proton gradient. In Mycobacterium tuberculosis (strain CDC 1551 / Oshkosh), this protein is NADH-quinone oxidoreductase subunit N.